The chain runs to 273 residues: Glucosamine-6-phosphate deaminase (273 aa).

The Proton acceptor; for enolization step role is filled by D72. Residue D141 is the For ring-opening step of the active site. Catalysis depends on H143, which acts as the Proton acceptor; for ring-opening step. Residue E148 is the For ring-opening step of the active site.

It belongs to the glucosamine/galactosamine-6-phosphate isomerase family. In terms of assembly, homohexamer.

The protein resides in the cytoplasm. It catalyses the reaction alpha-D-glucosamine 6-phosphate + H2O = beta-D-fructose 6-phosphate + NH4(+). The protein operates within nucleotide-sugar biosynthesis; UDP-N-acetyl-alpha-D-glucosamine biosynthesis; alpha-D-glucosamine 6-phosphate from D-fructose 6-phosphate: step 1/1. Functionally, catalyzes the reversible conversion of alpha-D-glucosamine 6-phosphate (GlcN-6P) into beta-D-fructose 6-phosphate (Fru-6P) and ammonium ion, a regulatory reaction step in de novo uridine diphosphate-N-acetyl-alpha-D-glucosamine (UDP-GlcNAc) biosynthesis via hexosamine pathway. The polypeptide is Glucosamine-6-phosphate deaminase (Drosophila melanogaster (Fruit fly)).